A 666-amino-acid polypeptide reads, in one-letter code: 1,4-alpha-glucan branching enzyme GlgB (666 aa).

Asp-309 serves as the catalytic Nucleophile. Residue Glu-352 is the Proton donor of the active site. A compositionally biased stretch (basic and acidic residues) spans 622 to 634; it reads RGERKQNEEEVHR. The interval 622–666 is disordered; that stretch reads RGERKQNEEEVHRHVIGRRARKPASLADEKHRETSRAVWGEVPDH.

This sequence belongs to the glycosyl hydrolase 13 family. GlgB subfamily. As to quaternary structure, monomer.

It catalyses the reaction Transfers a segment of a (1-&gt;4)-alpha-D-glucan chain to a primary hydroxy group in a similar glucan chain.. Its pathway is glycan biosynthesis; glycogen biosynthesis. Its function is as follows. Catalyzes the formation of the alpha-1,6-glucosidic linkages in glycogen by scission of a 1,4-alpha-linked oligosaccharide from growing alpha-1,4-glucan chains and the subsequent attachment of the oligosaccharide to the alpha-1,6 position. This chain is 1,4-alpha-glucan branching enzyme GlgB (glgB), found in Bacillus caldolyticus.